We begin with the raw amino-acid sequence, 352 residues long: tRNA pseudouridine synthase D (352 aa).

Catalysis depends on Asp81, which acts as the Nucleophile. The TRUD domain maps to 157 to 303 (GVPNYFGLQR…MAHERRILRL (147 aa)).

Belongs to the pseudouridine synthase TruD family.

The catalysed reaction is uridine(13) in tRNA = pseudouridine(13) in tRNA. Its function is as follows. Responsible for synthesis of pseudouridine from uracil-13 in transfer RNAs. This chain is tRNA pseudouridine synthase D, found in Ectopseudomonas mendocina (strain ymp) (Pseudomonas mendocina).